The chain runs to 153 residues: SsrA-binding protein (153 aa).

It belongs to the SmpB family.

It localises to the cytoplasm. Its function is as follows. Required for rescue of stalled ribosomes mediated by trans-translation. Binds to transfer-messenger RNA (tmRNA), required for stable association of tmRNA with ribosomes. tmRNA and SmpB together mimic tRNA shape, replacing the anticodon stem-loop with SmpB. tmRNA is encoded by the ssrA gene; the 2 termini fold to resemble tRNA(Ala) and it encodes a 'tag peptide', a short internal open reading frame. During trans-translation Ala-aminoacylated tmRNA acts like a tRNA, entering the A-site of stalled ribosomes, displacing the stalled mRNA. The ribosome then switches to translate the ORF on the tmRNA; the nascent peptide is terminated with the 'tag peptide' encoded by the tmRNA and targeted for degradation. The ribosome is freed to recommence translation, which seems to be the essential function of trans-translation. The polypeptide is SsrA-binding protein (Orientia tsutsugamushi (strain Ikeda) (Rickettsia tsutsugamushi)).